The following is a 316-amino-acid chain: tRNA dimethylallyltransferase (316 aa).

Residue 17-24 coordinates ATP; it reads GPTASGKT. 19–24 serves as a coordination point for substrate; it reads TASGKT. Interaction with substrate tRNA regions lie at residues 42 to 45, 166 to 170, 247 to 252, and 280 to 287; these read DSAL, QRLSR, RCVGYR, and KRQITWLR.

Belongs to the IPP transferase family. As to quaternary structure, monomer. Requires Mg(2+) as cofactor.

It carries out the reaction adenosine(37) in tRNA + dimethylallyl diphosphate = N(6)-dimethylallyladenosine(37) in tRNA + diphosphate. In terms of biological role, catalyzes the transfer of a dimethylallyl group onto the adenine at position 37 in tRNAs that read codons beginning with uridine, leading to the formation of N6-(dimethylallyl)adenosine (i(6)A). In Enterobacter sp. (strain 638), this protein is tRNA dimethylallyltransferase.